Reading from the N-terminus, the 151-residue chain is MLP-like protein 328 (151 aa).

This sequence belongs to the MLP family.

This Arabidopsis thaliana (Mouse-ear cress) protein is MLP-like protein 328 (MLP328).